The following is a 293-amino-acid chain: Pyridoxal 5'-phosphate synthase subunit PdxS (293 aa).

Asp23 is a D-ribose 5-phosphate binding site. Catalysis depends on Lys80, which acts as the Schiff-base intermediate with D-ribose 5-phosphate. Gly152 provides a ligand contact to D-ribose 5-phosphate. Arg164 lines the D-glyceraldehyde 3-phosphate pocket. Residues Gly213 and 234–235 (GS) each bind D-ribose 5-phosphate.

It belongs to the PdxS/SNZ family. In the presence of PdxT, forms a dodecamer of heterodimers.

It carries out the reaction aldehydo-D-ribose 5-phosphate + D-glyceraldehyde 3-phosphate + L-glutamine = pyridoxal 5'-phosphate + L-glutamate + phosphate + 3 H2O + H(+). The protein operates within cofactor biosynthesis; pyridoxal 5'-phosphate biosynthesis. In terms of biological role, catalyzes the formation of pyridoxal 5'-phosphate from ribose 5-phosphate (RBP), glyceraldehyde 3-phosphate (G3P) and ammonia. The ammonia is provided by the PdxT subunit. Can also use ribulose 5-phosphate and dihydroxyacetone phosphate as substrates, resulting from enzyme-catalyzed isomerization of RBP and G3P, respectively. The sequence is that of Pyridoxal 5'-phosphate synthase subunit PdxS from Desulfovibrio desulfuricans (strain ATCC 27774 / DSM 6949 / MB).